We begin with the raw amino-acid sequence, 543 residues long: Methionine--tRNA ligase (543 aa).

Residues 13-23 carry the 'HIGH' region motif; it reads PYANGPLHVGH. 4 residues coordinate Zn(2+): Cys-145, Cys-148, Cys-158, and Cys-161. Residues 334–338 carry the 'KMSKS' region motif; the sequence is QFSKS. Lys-337 is an ATP binding site.

Belongs to the class-I aminoacyl-tRNA synthetase family. MetG type 1 subfamily. The cofactor is Zn(2+).

It localises to the cytoplasm. The enzyme catalyses tRNA(Met) + L-methionine + ATP = L-methionyl-tRNA(Met) + AMP + diphosphate. Is required not only for elongation of protein synthesis but also for the initiation of all mRNA translation through initiator tRNA(fMet) aminoacylation. The polypeptide is Methionine--tRNA ligase (Thermoplasma volcanium (strain ATCC 51530 / DSM 4299 / JCM 9571 / NBRC 15438 / GSS1)).